A 97-amino-acid polypeptide reads, in one-letter code: U6-theraphotoxin-Hhn1a 4 (97 aa).

A signal peptide spans 1-33 (MLIKQFSRRSKNMKVQILLAFAALFVLAVGSYA). The propeptide occupies 34–61 (SESKKLDLRDALLSAMFSADYQLNPQER). 3 disulfide bridges follow: C63–C77, C70–C82, and C76–C89.

This sequence belongs to the neurotoxin 10 (Hwtx-1) family. 12 (Hntx-12) subfamily. As to expression, expressed by the venom gland.

The protein localises to the secreted. Ion channel inhibitor. The protein is U6-theraphotoxin-Hhn1a 4 of Cyriopagopus hainanus (Chinese bird spider).